The primary structure comprises 615 residues: Forkhead box protein O (615 aa).

Disordered regions lie at residues 39-77 (RARS…DSQQ), 182-205 (KSVR…RAKK), 217-269 (GLND…RLSP), 318-359 (FSAA…APGY), and 389-409 (NSVT…SDSL). T44 carries the post-translational modification Phosphothreonine; by PKB/AKT1. Residues 63-77 (TKASNQQLAPGDSQQ) show a composition bias toward polar residues. Phosphoserine is present on S75. Positions 95 to 201 (WGNLSYADLI…ETSRYEKRRG (107 aa)) form a DNA-binding region, fork-head. S190 is modified (phosphoserine; by PKB/AKT1). Polar residues-rich tracts occupy residues 221–230 (ATPSPSSSVS) and 256–265 (RASSNASSCG). A Phosphoserine; by PKB/AKT1 modification is found at S259. Phosphoserine is present on residues S262, S263, and S268. The segment covering 326–335 (SQPPPPPYQP) has biased composition (pro residues). The span at 336-351 (PQHQQAQQQQQQSPYA) shows a compositional bias: low complexity.

Interacts with melt.

The protein resides in the cytoplasm. It is found in the nucleus. Its function is as follows. Transcription factor involved in the regulation of the insulin signaling pathway. Consistently activates both the downstream target Thor\d4EBP and the feedback control target InR. Involved in negative regulation of the cell cycle, modulating cell growth and proliferation. In response to cellular stresses, such as nutrient deprivation or increased levels of reactive oxygen species, foxo is activated and inhibits growth through the action of target genes such as Thor. Foxo activated in the adult fat body can regulate lifespan in adults; an insulin peptide itself may function as one secondary messenger of insulin-regulated aging. Also regulates Lip4, homolog of human acid lipases, thereby acting as a key modulator of lipid metabolism by insulin signaling and integrates insulin responses to glucose and lipid homeostasis. The polypeptide is Forkhead box protein O (Drosophila erecta (Fruit fly)).